A 154-amino-acid polypeptide reads, in one-letter code: Myoglobin (154 aa).

The region spanning 2-148 is the Globin domain; sequence GLSDGEWHLV…FRNDIAAKYK (147 aa). Serine 4 carries the post-translational modification Phosphoserine. Histidine 65 is a binding site for nitrite. O2 is bound at residue histidine 65. Threonine 68 is modified (phosphothreonine). Residue histidine 94 coordinates heme b.

Belongs to the globin family. Monomeric.

It localises to the cytoplasm. The protein resides in the sarcoplasm. It catalyses the reaction Fe(III)-heme b-[protein] + nitric oxide + H2O = Fe(II)-heme b-[protein] + nitrite + 2 H(+). It carries out the reaction H2O2 + AH2 = A + 2 H2O. Monomeric heme protein which primary function is to store oxygen and facilitate its diffusion within muscle tissues. Reversibly binds oxygen through a pentacoordinated heme iron and enables its timely and efficient release as needed during periods of heightened demand. Depending on the oxidative conditions of tissues and cells, and in addition to its ability to bind oxygen, it also has a nitrite reductase activity whereby it regulates the production of bioactive nitric oxide. Under stress conditions, like hypoxia and anoxia, it also protects cells against reactive oxygen species thanks to its pseudoperoxidase activity. This chain is Myoglobin (MB), found in Halichoerus grypus (Gray seal).